A 71-amino-acid chain; its full sequence is Translation initiation factor IF-1 (71 aa).

One can recognise an S1-like domain in the interval 1 to 71 (MSKDDLIQFT…LTKGRVIHRH (71 aa)).

The protein belongs to the IF-1 family. As to quaternary structure, component of the 30S ribosomal translation pre-initiation complex which assembles on the 30S ribosome in the order IF-2 and IF-3, IF-1 and N-formylmethionyl-tRNA(fMet); mRNA recruitment can occur at any time during PIC assembly.

Its subcellular location is the cytoplasm. In terms of biological role, one of the essential components for the initiation of protein synthesis. Stabilizes the binding of IF-2 and IF-3 on the 30S subunit to which N-formylmethionyl-tRNA(fMet) subsequently binds. Helps modulate mRNA selection, yielding the 30S pre-initiation complex (PIC). Upon addition of the 50S ribosomal subunit IF-1, IF-2 and IF-3 are released leaving the mature 70S translation initiation complex. The chain is Translation initiation factor IF-1 from Rickettsia canadensis (strain McKiel).